Here is a 686-residue protein sequence, read N- to C-terminus: ATP-dependent zinc metalloprotease FTSH 1, chloroplastic (686 aa).

A chloroplast-targeting transit peptide spans 1-16; that stretch reads MAPPCSISSASHLLIT. Residues 173–193 traverse the membrane as a helical segment; sequence FLAFVGNLLFPFLAFAGLFFL. Position 272 to 279 (272 to 279) interacts with ATP; the sequence is GPPGTGKT. His-494 contributes to the Zn(2+) binding site. Residue Glu-495 is part of the active site. The Zn(2+) site is built by His-498 and Asp-575.

This sequence in the N-terminal section; belongs to the AAA ATPase family. The protein in the C-terminal section; belongs to the peptidase M41 family. Zn(2+) is required as a cofactor.

The protein resides in the plastid. Its subcellular location is the chloroplast thylakoid membrane. Its function is as follows. Probable ATP-dependent zinc metallopeptidase. This Oryza sativa subsp. japonica (Rice) protein is ATP-dependent zinc metalloprotease FTSH 1, chloroplastic (FTSH1).